Consider the following 1103-residue polypeptide: DNA polymerase delta catalytic subunit (1103 aa).

A disordered region spans residues 1–29 (MDFKRRQGPGPGVPPKRARGGLWDEDEPS). The Nuclear localization signal signature appears at 4-19 (KRRQGPGPGVPPKRAR). At Arg-19 the chain carries Omega-N-methylarginine. Residue Lys-570 forms a Glycyl lysine isopeptide (Lys-Gly) (interchain with G-Cter in SUMO2) linkage. Zn(2+)-binding residues include Cys-1008, Cys-1011, Cys-1022, and Cys-1025. The CysA-type zinc finger occupies 1008 to 1025 (CIGCRSVINHQGAVCEFC). Residues Cys-1054, Cys-1057, Cys-1067, and Cys-1072 each coordinate [4Fe-4S] cluster. The short motif at 1054 to 1072 (CQRCQGSLHEDVICTSRDC) is the CysB motif element.

This sequence belongs to the DNA polymerase type-B family. In terms of assembly, component of the tetrameric DNA polymerase delta complex (Pol-delta4), which consists of POLD1/p125, POLD2/p50, POLD3/p66/p68 and POLD4/p12, with POLD1 bearing both DNA polymerase and 3' to 5' proofreading exonuclease activities. Within Pol-delta4, directly interacts with POLD2 and POLD4. Following genotoxic stress by DNA-damaging agents, such as ultraviolet light and methyl methanesulfonate, or by replication stress induced by treatment with hydroxyurea or aphidicolin, Pol-delta4 is converted into a trimeric form of the complex (Pol-delta3) by POLD4 degradation. Pol-delta3 is the major form at S phase replication sites and DNA damage sites. POLD1 displays different catalytic properties depending upon the complex it is found in. It exhibits higher proofreading activity and fidelity than Pol-delta4, making it particularly well suited to respond to DNA damage. Directly interacts with PCNA, as do POLD3 and POLD4; this interaction stimulates Pol-delta4 polymerase activity. As POLD2 and POLD4, directly interacts with WRNIP1; this interaction stimulates DNA polymerase delta-mediated DNA synthesis, independently of the presence of PCNA. This stimulation may be due predominantly to an increase of initiation frequency and also to increased processivity. Also observed as a dimeric complex with POLD2 (Pol-delta2). Pol-delta2 is relatively insensitive to the PCNA stimulation (2-5-fold) compared to Pol-delta4 that is stimulated by over 50-fold. The DNA polymerase delta complex interacts with POLDIP2; this interaction is probably mediated through direct binding to POLD2. Interacts with CIAO1. Interacts with POLDIP2. Interacts with RFC1. It depends on [4Fe-4S] cluster as a cofactor.

Its subcellular location is the nucleus. The catalysed reaction is DNA(n) + a 2'-deoxyribonucleoside 5'-triphosphate = DNA(n+1) + diphosphate. Its activity is regulated as follows. Regulated by alteration of quaternary structure. Exhibits burst rates of DNA synthesis are about 5 times faster in the presence of POLD4 (Pol-delta4 complex) than in its absence (Pol-delta3 complex), while the affinity of the enzyme for its DNA and dNTP substrates appears unchanged. The Pol-delta3 complex is more likely to proofread DNA synthesis because it cleaves single-stranded DNA twice as fast and transfers mismatched DNA from the polymerase to the exonuclease sites 9 times faster compared to the Pol-delta3 complex. Pol-delta3 also extends mismatched primers 3 times more slowly in the absence of POLD4. The conversion of Pol-delta4 into Pol-delta3 is induced by genotoxic stress or by replication stress leading POLD4 degradation. Stimulated in the presence of PCNA. This stimulation is further increased in the presence of KCTD13/PDIP1, most probably via direct interaction between KCTD13 and POLD2. Functionally, as the catalytic component of the trimeric (Pol-delta3 complex) and tetrameric DNA polymerase delta complexes (Pol-delta4 complex), plays a crucial role in high fidelity genome replication, including in lagging strand synthesis, and repair. Exhibits both DNA polymerase and 3'- to 5'-exonuclease activities. Requires the presence of accessory proteins POLD2, POLD3 and POLD4 for full activity. Depending upon the absence (Pol-delta3) or the presence of POLD4 (Pol-delta4), displays differences in catalytic activity. Most notably, expresses higher proofreading activity in the context of Pol-delta3 compared with that of Pol-delta4. Although both Pol-delta3 and Pol-delta4 process Okazaki fragments in vitro, Pol-delta3 may be better suited to fulfill this task, exhibiting near-absence of strand displacement activity compared to Pol-delta4 and stalling on encounter with the 5'-blocking oligonucleotides. Pol-delta3 idling process may avoid the formation of a gap, while maintaining a nick that can be readily ligated. Along with DNA polymerase kappa, DNA polymerase delta carries out approximately half of nucleotide excision repair (NER) synthesis following UV irradiation. Under conditions of DNA replication stress, in the presence of POLD3 and POLD4, may catalyze the repair of broken replication forks through break-induced replication (BIR). Involved in the translesion synthesis (TLS) of templates carrying O6-methylguanine, 8oxoG or abasic sites. The sequence is that of DNA polymerase delta catalytic subunit (POLD1) from Mesocricetus auratus (Golden hamster).